A 111-amino-acid chain; its full sequence is Large ribosomal subunit protein uL23 (111 aa).

It belongs to the universal ribosomal protein uL23 family. In terms of assembly, part of the 50S ribosomal subunit. Contacts protein L29, and trigger factor when it is bound to the ribosome.

Functionally, one of the early assembly proteins it binds 23S rRNA. One of the proteins that surrounds the polypeptide exit tunnel on the outside of the ribosome. Forms the main docking site for trigger factor binding to the ribosome. The sequence is that of Large ribosomal subunit protein uL23 from Nitrosomonas europaea (strain ATCC 19718 / CIP 103999 / KCTC 2705 / NBRC 14298).